Consider the following 276-residue polypeptide: Protein canopy homolog 3 (276 aa).

An N-terminal signal peptide occupies residues 1–26 (MESMSELAPRCLLFPLLLLLPLLLLP). One can recognise a Saposin B-type domain in the interval 47–269 (SKCEVCKYVA…EGVQKASPLP (223 aa)). Intrachain disulfides connect Cys49/Cys206, Cys52/Cys194, and Cys104/Cys166. Asn153 carries N-linked (GlcNAc...) asparagine glycosylation. A coiled-coil region spans residues 153 to 179 (NETSAEVADLKKQCDVLVEEFEEVIED). Residues 218–276 (IASLGGKKSKKKRSGVKGSSSGSSKQRKELGGLGEDANAEEEEGVQKASPLPHSPPDEL) form a disordered region.

This sequence belongs to the canopy family. As to quaternary structure, interacts with HSP90B1; this interaction is disrupted in the presence of ATP. Interacts with TLR1, TLR2, TLR4 and TLR9. Strongest interaction with TLR4.

It localises to the endoplasmic reticulum. Functionally, toll-like receptor (TLR)-specific co-chaperone for HSP90B1. Required for proper TLR folding, except that of TLR3, and hence controls TLR exit from the endoplasmic reticulum. Consequently, required for both innate and adaptive immune responses. The polypeptide is Protein canopy homolog 3 (Cnpy3) (Mus musculus (Mouse)).